A 478-amino-acid chain; its full sequence is Dihydrolipoyl dehydrogenase (478 aa).

Residues 34-49 (EKYIGKEGKVALGGTC), Lys58, and Gly122 each bind FAD. Cysteines 49 and 54 form a disulfide. Residues 188–192 (GAGVI), Glu211, Val245, and 276–279 (AVGR) each bind NAD(+). Residues Asp319 and Ala327 each contribute to the FAD site. Residue His451 is the Proton acceptor of the active site.

It belongs to the class-I pyridine nucleotide-disulfide oxidoreductase family. As to quaternary structure, homodimer. The cofactor is FAD.

Its subcellular location is the cytoplasm. The enzyme catalyses N(6)-[(R)-dihydrolipoyl]-L-lysyl-[protein] + NAD(+) = N(6)-[(R)-lipoyl]-L-lysyl-[protein] + NADH + H(+). Functionally, the branched-chain alpha-keto dehydrogenase complex catalyzes the overall conversion of alpha-keto acids to acyl-CoA and CO(2). It contains multiple copies of 3 enzymatic components: branched-chain alpha-keto acid decarboxylase (E1), lipoamide acyltransferase (E2) and lipoamide dehydrogenase (E3). In terms of biological role, also acts in the glycine cleavage system. This is Dihydrolipoyl dehydrogenase (lpdG) from Pseudomonas aeruginosa (strain ATCC 15692 / DSM 22644 / CIP 104116 / JCM 14847 / LMG 12228 / 1C / PRS 101 / PAO1).